The following is a 275-amino-acid chain: MNYNQPATLQAAILDWAGTVVDFGSFAPTQIFVEAFAEFGVQVSLEEARGPMGMGKWDHIRTLCDIPAIAERYRAVFGRLPSDDDVTAIYERFMPLQIEKIAEHSALIPGALQAIAELRGMGLKIGSCSGYPAVVMEKVVALAETNGYVADHVVATDEVPNGRPWPAQALANVIALGIDDVAACVKVDDTWPGILEGRRAGMWTVALTCSGNALGLTYEQYKALPAAELERERTRIEQMFEGSRPHYLIETIAELPAVVRDINARLARGEMPQGN.

Asp15 functions as the Nucleophile in the catalytic mechanism. The Mg(2+) site is built by Asp15 and Ala17. Lys56 serves as the catalytic Schiff-base intermediate with substrate. Asp189 is a Mg(2+) binding site.

This sequence belongs to the HAD-like hydrolase superfamily. PhnX family. As to quaternary structure, homodimer. Mg(2+) is required as a cofactor.

It catalyses the reaction phosphonoacetaldehyde + H2O = acetaldehyde + phosphate + H(+). Involved in phosphonate degradation. This chain is Phosphonoacetaldehyde hydrolase, found in Pseudomonas aeruginosa (strain UCBPP-PA14).